The following is a 243-amino-acid chain: DNA repair protein RecO (243 aa).

It belongs to the RecO family.

In terms of biological role, involved in DNA repair and RecF pathway recombination. The sequence is that of DNA repair protein RecO from Phenylobacterium zucineum (strain HLK1).